The primary structure comprises 253 residues: MSSQTPGSEPRMEIWPAIDLRHGKPVRLRQGDYDQQTTFGDDPVEFAKRWQESGAKRLHLVDLDAARGDSPDANRDAVQRIIEATGLPCQMGGGVRDEITIESLLNVGVTRLVVGSRALKDPDWFVEMCDKYPGKLVAGIDARDGKVATQGWLETSDVSAFEFATKLRSRTENIAAIVYTDIAKDGMMQGPNFEGLAEMAAASDIPLVASGGVTTYDDIKQLVEMKMPAAIVGRSLYDGVMELGEVVRLAGDV.

D19 acts as the Proton acceptor in catalysis. D141 serves as the catalytic Proton donor.

Belongs to the HisA/HisF family.

It is found in the cytoplasm. The enzyme catalyses 1-(5-phospho-beta-D-ribosyl)-5-[(5-phospho-beta-D-ribosylamino)methylideneamino]imidazole-4-carboxamide = 5-[(5-phospho-1-deoxy-D-ribulos-1-ylimino)methylamino]-1-(5-phospho-beta-D-ribosyl)imidazole-4-carboxamide. It participates in amino-acid biosynthesis; L-histidine biosynthesis; L-histidine from 5-phospho-alpha-D-ribose 1-diphosphate: step 4/9. This is 1-(5-phosphoribosyl)-5-[(5-phosphoribosylamino)methylideneamino] imidazole-4-carboxamide isomerase from Rhodopirellula baltica (strain DSM 10527 / NCIMB 13988 / SH1).